Reading from the N-terminus, the 427-residue chain is Adenylosuccinate synthetase (427 aa).

GTP contacts are provided by residues 12–18 (GDEGKGK) and 40–42 (GHT). Residue D13 is the Proton acceptor of the active site. Residues D13 and G40 each contribute to the Mg(2+) site. Residues 13-16 (DEGK), 38-41 (NAGH), T126, R140, Q221, T236, and R299 contribute to the IMP site. H41 (proton donor) is an active-site residue. 295-301 (STTNRPR) contacts substrate. GTP contacts are provided by residues R301, 327–329 (KLD), and 409–411 (SLG).

Belongs to the adenylosuccinate synthetase family. As to quaternary structure, homodimer. The cofactor is Mg(2+).

The protein resides in the cytoplasm. The enzyme catalyses IMP + L-aspartate + GTP = N(6)-(1,2-dicarboxyethyl)-AMP + GDP + phosphate + 2 H(+). It functions in the pathway purine metabolism; AMP biosynthesis via de novo pathway; AMP from IMP: step 1/2. In terms of biological role, plays an important role in the de novo pathway of purine nucleotide biosynthesis. Catalyzes the first committed step in the biosynthesis of AMP from IMP. This Borrelia turicatae (strain 91E135) protein is Adenylosuccinate synthetase.